Here is a 631-residue protein sequence, read N- to C-terminus: 1-deoxy-D-xylulose-5-phosphate synthase (631 aa).

Residues histidine 87 and 128–130 (GHS) contribute to the thiamine diphosphate site. Residue aspartate 159 participates in Mg(2+) binding. Thiamine diphosphate-binding positions include 160–161 (GA), asparagine 188, phenylalanine 295, and glutamate 377. Residue asparagine 188 participates in Mg(2+) binding.

It belongs to the transketolase family. DXPS subfamily. Homodimer. Requires Mg(2+) as cofactor. It depends on thiamine diphosphate as a cofactor.

The catalysed reaction is D-glyceraldehyde 3-phosphate + pyruvate + H(+) = 1-deoxy-D-xylulose 5-phosphate + CO2. The protein operates within metabolic intermediate biosynthesis; 1-deoxy-D-xylulose 5-phosphate biosynthesis; 1-deoxy-D-xylulose 5-phosphate from D-glyceraldehyde 3-phosphate and pyruvate: step 1/1. Catalyzes the acyloin condensation reaction between C atoms 2 and 3 of pyruvate and glyceraldehyde 3-phosphate to yield 1-deoxy-D-xylulose-5-phosphate (DXP). The chain is 1-deoxy-D-xylulose-5-phosphate synthase from Pseudomonas putida (strain GB-1).